The following is a 793-amino-acid chain: MEHHCGLITSNKETVPLKNISVTLSINEFVAAVVATLNYENEEKVPLEATFVFPMDEDSAVYSFEALVDGKKIVAELQDKMKAHSEYEEALSQGHQAYLLEEDDYSRDVFSCNVGNLQPGAKVAVTLRYVQELPLETDGALRYLLPAILNPRYQLSEQSANSCLNIQKPTVPLEDLPYTLNMTATITSQHGIERVQSNCSLSPIQYLTDDKTSAQVSLTEGHKFDRDVELLIYYNEVHSPSVAVEMGMLDMKPDSLMGAPSAMVSFYPDIPEVEASKACGEFVFLMDRSGSMDSPMSTENNSQLRIEAAKETLLLLLKSLPMGCYFNIYGFGSSYEKFFPESVKYTQDTMEDAVKRVKALKANLGGTEILTPLCNIYKASSIPGHPLQLFVFTDGEVSDTFSVIREVKLNSKKHRCFSFGIGQGASTSLIKNIARVSGGTAVFITGKDRMQTKALGSLKFALQCAVDNISLSWDLPPGLSVKMLSPEQLTIFRGQRLIIYAQLTGLMPQVESTGAVCLKHILQGRSLENRVTFSLQPKANDNFTIHRLAAKSLIQTKDFGSQEASKEEKEDVMNISLQSGVLSSFTAFIAINKELNKPVQGPLAHRVIPRPVMAGSSSMRFYSSFSGGFKGPQPRSLRVPAYDLCSAESANLVLKKSACSAIQKKKTNSSTNKSNLKKEHKAFGENAVVQLISLQKANGSWELDEDLTKILGTKSKDIKAANPAKHEDPSAWSTVLAVVWLHANGTDLKCEWELLERKAVAWLHDHAGSSIPMLVQAANSLLKLSVNPAVFGV.

Residues 1–131 (MEHHCGLITS…KVAVTLRYVQ (131 aa)) enclose the VIT domain. Residues 281–469 (EFVFLMDRSG…FALQCAVDNI (189 aa)) enclose the VWFA domain. Residue Tyr622 is modified to Phosphotyrosine.

Functionally, may play a role in tumorigenesis as a tumor suppressor. Altered expression of this protein and disruption of the molecular pathway it is involved in may contribute directly to or modify tumorigenesis. The chain is von Willebrand factor A domain-containing protein 5A (Vwa5a) from Mus musculus (Mouse).